Consider the following 364-residue polypeptide: GDP-fucose transporter 1 (364 aa).

The next 8 helical transmembrane spans lie at F34–V56, V76–C98, L111–F130, V140–L162, S167–V185, S195–I214, I227–L249, and A264–L286.

Belongs to the TPT transporter family. SLC35C subfamily.

Its subcellular location is the golgi apparatus membrane. It carries out the reaction GMP(out) + GDP-beta-L-fucose(in) = GMP(in) + GDP-beta-L-fucose(out). Its function is as follows. Antiporter specific for GDP-l-fucose and depending on the concomitant reverse transport of GMP. Involved in GDP-fucose import from the cytoplasm into the Golgi lumen. In Homo sapiens (Human), this protein is GDP-fucose transporter 1.